Here is a 316-residue protein sequence, read N- to C-terminus: Ribosomal RNA small subunit methyltransferase H (316 aa).

Residues 35–37, aspartate 55, phenylalanine 84, aspartate 105, and glutamine 112 contribute to the S-adenosyl-L-methionine site; that span reads AGH.

This sequence belongs to the methyltransferase superfamily. RsmH family.

The protein resides in the cytoplasm. The enzyme catalyses cytidine(1402) in 16S rRNA + S-adenosyl-L-methionine = N(4)-methylcytidine(1402) in 16S rRNA + S-adenosyl-L-homocysteine + H(+). In terms of biological role, specifically methylates the N4 position of cytidine in position 1402 (C1402) of 16S rRNA. The protein is Ribosomal RNA small subunit methyltransferase H of Streptococcus thermophilus (strain CNRZ 1066).